The following is a 231-amino-acid chain: MRFDIITLFPDFFTSPLQSGLLGKALDKQIAQVNLVNPRDFALDKHHRVDDEPYGGGVGMLLKPEPIFAAVESLEILPRREVVLMTPQGQPLSQPILRELATDFDQLVLICGHYEGVDERVTQYLVTREISLGDFVLTCGEIPALTVLNGVIRLLPGTVGKEESLKLESFEADLLDYPQYTRPALFRDWEVPAVLRSGNHQAIEQWRKQQQIERTKERRPDLWEKWTINNG.

S-adenosyl-L-methionine-binding positions include glycine 112 and leucine 132–leucine 137.

Belongs to the RNA methyltransferase TrmD family. In terms of assembly, homodimer.

Its subcellular location is the cytoplasm. It carries out the reaction guanosine(37) in tRNA + S-adenosyl-L-methionine = N(1)-methylguanosine(37) in tRNA + S-adenosyl-L-homocysteine + H(+). Functionally, specifically methylates guanosine-37 in various tRNAs. The chain is tRNA (guanine-N(1)-)-methyltransferase from Gloeothece citriformis (strain PCC 7424) (Cyanothece sp. (strain PCC 7424)).